A 345-amino-acid chain; its full sequence is Protein-glutamate methylesterase/protein-glutamine glutaminase 2 (345 aa).

The 118-residue stretch at 7–124 (KVLVVDDSPV…TADMLGYRSL (118 aa)) folds into the Response regulatory domain. 4-aspartylphosphate is present on Asp-58. The region spanning 154 to 345 (STSQYQLIAI…LPQFLCDLLS (192 aa)) is the CheB-type methylesterase domain. Catalysis depends on residues Ser-166, His-192, and Asp-289.

The protein belongs to the CheB family. Post-translationally, phosphorylated by CheA. Phosphorylation of the N-terminal regulatory domain activates the methylesterase activity.

Its subcellular location is the cytoplasm. It carries out the reaction [protein]-L-glutamate 5-O-methyl ester + H2O = L-glutamyl-[protein] + methanol + H(+). The enzyme catalyses L-glutaminyl-[protein] + H2O = L-glutamyl-[protein] + NH4(+). Its function is as follows. Involved in chemotaxis. Part of a chemotaxis signal transduction system that modulates chemotaxis in response to various stimuli. Catalyzes the demethylation of specific methylglutamate residues introduced into the chemoreceptors (methyl-accepting chemotaxis proteins or MCP) by CheR. Also mediates the irreversible deamidation of specific glutamine residues to glutamic acid. The chain is Protein-glutamate methylesterase/protein-glutamine glutaminase 2 from Vibrio vulnificus (strain YJ016).